We begin with the raw amino-acid sequence, 78 residues long: Acyl carrier protein (78 aa).

The Carrier domain occupies 2-77 (SEIASRVKAI…DAVAYIEEHA (76 aa)). Residue Ser37 is modified to O-(pantetheine 4'-phosphoryl)serine.

The protein belongs to the acyl carrier protein (ACP) family. Post-translationally, 4'-phosphopantetheine is transferred from CoA to a specific serine of apo-ACP by AcpS. This modification is essential for activity because fatty acids are bound in thioester linkage to the sulfhydryl of the prosthetic group.

The protein resides in the cytoplasm. It functions in the pathway lipid metabolism; fatty acid biosynthesis. Functionally, carrier of the growing fatty acid chain in fatty acid biosynthesis. In Bacteroides fragilis (strain ATCC 25285 / DSM 2151 / CCUG 4856 / JCM 11019 / LMG 10263 / NCTC 9343 / Onslow / VPI 2553 / EN-2), this protein is Acyl carrier protein.